Here is a 375-residue protein sequence, read N- to C-terminus: 23S rRNA (uracil(747)-C(5))-methyltransferase RlmC (375 aa).

Residues C3, C11, C14, and C87 each coordinate [4Fe-4S] cluster. 4 residues coordinate S-adenosyl-L-methionine: Q212, F241, E262, and N307. C334 serves as the catalytic Nucleophile.

This sequence belongs to the class I-like SAM-binding methyltransferase superfamily. RNA M5U methyltransferase family. RlmC subfamily.

The enzyme catalyses uridine(747) in 23S rRNA + S-adenosyl-L-methionine = 5-methyluridine(747) in 23S rRNA + S-adenosyl-L-homocysteine + H(+). Functionally, catalyzes the formation of 5-methyl-uridine at position 747 (m5U747) in 23S rRNA. In Vibrio cholerae serotype O1 (strain ATCC 39541 / Classical Ogawa 395 / O395), this protein is 23S rRNA (uracil(747)-C(5))-methyltransferase RlmC.